The chain runs to 206 residues: Outer-membrane lipoprotein LolB (206 aa).

A signal peptide spans 1-18 (MKTFKFLTALFATAILTA). The N-palmitoyl cysteine moiety is linked to residue C19. Residue C19 is the site of S-diacylglycerol cysteine attachment.

Belongs to the LolB family. In terms of assembly, monomer.

The protein localises to the cell outer membrane. Functionally, plays a critical role in the incorporation of lipoproteins in the outer membrane after they are released by the LolA protein. The polypeptide is Outer-membrane lipoprotein LolB (Haemophilus influenzae (strain PittEE)).